Here is a 944-residue protein sequence, read N- to C-terminus: DNA ligase 4 (944 aa).

ATP-binding residues include Glu-280, Lys-282, Arg-287, Glu-340, Phe-382, Glu-442, Lys-447, Lys-464, and Lys-466. Catalysis depends on Lys-282, which acts as the N6-AMP-lysine intermediate. A Mg(2+)-binding site is contributed by Glu-340. Glu-442 contacts Mg(2+). BRCT domains follow at residues 681–780 and 836–941; these read PISN…PNYC and FPLF…DFPV.

It belongs to the ATP-dependent DNA ligase family. Component of the DNA ligase IV complex, composed of DNL4, LIF1 and NEJ1. Interacts (via BRCT domain) with LIF1. Interacts with NEJ1. Interacts with POL4 in the DNL4-LIF1 complex. Requires Mg(2+) as cofactor.

It is found in the nucleus. It carries out the reaction ATP + (deoxyribonucleotide)n-3'-hydroxyl + 5'-phospho-(deoxyribonucleotide)m = (deoxyribonucleotide)n+m + AMP + diphosphate.. In terms of biological role, DNA ligase involved in DNA non-homologous end joining (NHEJ); required for double-strand break (DSB) repair. In Saccharomyces cerevisiae (strain ATCC 204508 / S288c) (Baker's yeast), this protein is DNA ligase 4 (DNL4).